Consider the following 214-residue polypeptide: Uridine kinase (214 aa).

Position 15–22 (15–22) interacts with ATP; that stretch reads GASASGKS.

Belongs to the uridine kinase family.

Its subcellular location is the cytoplasm. The catalysed reaction is uridine + ATP = UMP + ADP + H(+). It carries out the reaction cytidine + ATP = CMP + ADP + H(+). It functions in the pathway pyrimidine metabolism; CTP biosynthesis via salvage pathway; CTP from cytidine: step 1/3. It participates in pyrimidine metabolism; UMP biosynthesis via salvage pathway; UMP from uridine: step 1/1. The protein is Uridine kinase of Tolumonas auensis (strain DSM 9187 / NBRC 110442 / TA 4).